The chain runs to 1014 residues: Collagen alpha-1(I) chain (1014 aa).

Residues 1–1014 (SYGYDEKGGI…PGPPGPPGPP (1014 aa)) form a disordered region. Residues 9-22 (GISVPGPMGPSGPR) show a composition bias toward low complexity. Residues Pro25, Pro28, Pro30, Pro39, Pro42, Pro45, Pro60, Pro75, Pro81, Pro90, and Pro96 each carry the 4-hydroxyproline modification. A compositionally biased stretch (low complexity) spans 33–51 (QGFQGPPGEPGEPGSSGPM). Residues 63–77 (NGDDGEAGKPGRPGE) are compositionally biased toward basic and acidic residues. Residue Lys99 is modified to 5-hydroxylysine; alternate. O-linked (Gal...) hydroxylysine; alternate glycosylation is present at Lys99. Ser105 bears the Phosphoserine mark. Residues 113–129 (DAGPAGPKGEPGSPGEN) show a composition bias toward low complexity. Pro123, Pro126, Pro132, Pro141, Pro147, Pro168, Pro177, Pro180, Pro207, Pro210, Pro222, Pro228, Pro237, Pro243, Pro246, and Pro261 each carry 4-hydroxyproline. The segment covering 147–165 (PGASGPAGARGNDGATGAA) has biased composition (low complexity). The segment covering 167 to 179 (PPGPTGPAGPPGF) has biased composition (pro residues). The span at 213 to 252 (AGAAGPAGNPGADGQPGAKGANGAPGIAGAPGFPGARGPS) shows a compositional bias: low complexity. 5-hydroxylysine is present on Lys264. Residues Pro270, Pro273, Pro285, Pro294, Pro309, Pro315, Pro324, and Pro330 each carry the 4-hydroxyproline modification. Over residues 319–328 (GERGGPGSRG) the composition is skewed to gly residues. 5-hydroxylysine is present on Lys339. 4-hydroxyproline is present on residues Pro348, Pro357, Pro363, Pro369, Pro378, Pro381, Pro390, Pro399, Pro405, Pro417, Pro426, Pro435, Pro438, Pro456, Pro473, Pro479, Pro485, Pro491, Pro497, Pro503, Pro515, Pro524, Pro535, Pro548, Pro554, and Pro563. Low complexity predominate over residues 372-398 (KGLTGSPGSPGPDGKTGPPGPAGQDGR). Over residues 407–426 (ARGQAGVMGFPGPKGAAGEP) the composition is skewed to low complexity. A compositionally biased stretch (low complexity) spans 485–494 (PGEAGKPGEQ). A 5-hydroxylysine modification is found at Lys575. 3 positions are modified to 4-hydroxyproline: Pro581, Pro596, and Pro602. Residues 608 to 622 (SGPSGPAGPTGARGA) show a composition bias toward low complexity. The residue at position 611 (Ser611) is a Phosphoserine. 4-hydroxyproline occurs at positions 623, 629, 632, 641, 647, 674, and 683. A compositionally biased stretch (low complexity) spans 635–665 (AGFAGPPGADGQPGAKGEPGDAGAKGDAGPS). Lys686 is modified (5-hydroxylysine). Over residues 691–707 (SAGPPGATGFPGAAGRV) the composition is skewed to low complexity. Residues Pro695 and Pro701 each carry the 4-hydroxyproline modification. 3-hydroxyproline is present on Pro709. A 4-hydroxyproline mark is found at Pro710, Pro719, Pro722, Pro743, Pro752, Pro760, Pro769, Pro787, Pro796, Pro799, Pro805, Pro820, Pro826, Pro832, Pro841, and Pro847. Low complexity predominate over residues 736–745 (ETGPAGRPGE). The segment covering 757 to 769 (KGSPGADGPAGAP) has biased composition (low complexity). Positions 819-829 (PPGPVGPPGLA) are enriched in pro residues. A 5-hydroxylysine modification is found at Lys856. Over residues 864–879 (PGPPGAPGAPGAPGPV) the composition is skewed to pro residues. 4-hydroxyproline is present on residues Pro867, Pro870, and Pro873. The segment covering 900 to 914 (AGPAGARGPAGPQGP) has biased composition (low complexity). Over residues 915 to 929 (RGDKGETGEQGDRGI) the composition is skewed to basic and acidic residues. Lys918 is subject to 5-hydroxylysine. Lys930 is subject to 5-hydroxylysine; alternate. Residue Lys930 is glycosylated (O-linked (Gal...) hydroxylysine; alternate). Residues Pro945, Pro948, Pro966, and Pro981 each carry the 4-hydroxyproline modification. The segment covering 948-981 (PGEQGPSGASGPAGPRGPPGSAGSPGKDGLNGLP) has biased composition (low complexity). Position 986 is a 3-hydroxyproline (Pro986). Pro987 is subject to 4-hydroxyproline. The segment covering 999 to 1014 (VGPPGPPGPPGPPGPP) has biased composition (pro residues). Position 1001 is a 3-hydroxyproline (Pro1001). The residue at position 1002 (Pro1002) is a 4-hydroxyproline. Pro1004 carries the 3-hydroxyproline modification. Position 1005 is a 4-hydroxyproline (Pro1005). Position 1007 is a 3-hydroxyproline (Pro1007). Residues Pro1008, Pro1011, and Pro1014 each carry the 4-hydroxyproline modification.

This sequence belongs to the fibrillar collagen family. As to quaternary structure, trimers of one alpha 2(I) and two alpha 1(I) chains. Post-translationally, contains mostly 4-hydroxyproline. Proline residues at the third position of the tripeptide repeating unit (G-X-Y) are hydroxylated in some or all of the chains. Contains 3-hydroxyproline at a few sites. This modification occurs on the first proline residue in the sequence motif Gly-Pro-Hyp, where Hyp is 4-hydroxyproline. In terms of processing, lysine residues at the third position of the tripeptide repeating unit (G-X-Y) are 5-hydroxylated in some or all of the chains. Post-translationally, O-glycosylated on hydroxylated lysine residues. The O-linked glycan consists of a Glc-Gal disaccharide. As to expression, expressed in bones.

It is found in the secreted. The protein resides in the extracellular space. The protein localises to the extracellular matrix. Its function is as follows. Type I collagen is a member of group I collagen (fibrillar forming collagen). In Megatherium americanum (Giant ground sloth), this protein is Collagen alpha-1(I) chain.